Here is a 256-residue protein sequence, read N- to C-terminus: MVLLHHVSLSHYQNSSSLFSSSSESILCLFLVLCVMQLEQGMRPISRCYNPTAYSTTMGRSFFAGAATSSKLFSRGFSVTKPKSKTESKEVAAKKHSDAERRRRLRINSQFATLRTILPNLVKQDKASVLGETVRYFNELKKMVQDIPTTPSLEDNLRLDHCNNNRDLARVVFSCSDREGLMSEVAESMKAVKAKAVRAEIMTVGGRTKCALFVQGVNGNEGLVKLKKSLKLVVNGKSSSEAKNNNNGGSLLIQQQ.

Positions 91–140 (VAAKKHSDAERRRRLRINSQFATLRTILPNLVKQDKASVLGETVRYFNEL) constitute a bHLH domain.

Homodimer.

It localises to the nucleus. The protein is Transcription factor bHLH131 (BHLH131) of Arabidopsis thaliana (Mouse-ear cress).